A 111-amino-acid chain; its full sequence is U-scoloptoxin(16)-Er8a (111 aa).

Positions 1–26 (MTSTRKLSVSCLIVFMVSSLIAVSSG) are cleaved as a signal peptide.

This sequence belongs to the scoloptoxin-16 family. Post-translationally, contains 4 disulfide bonds. In terms of tissue distribution, expressed by the venom gland.

Its subcellular location is the secreted. This is U-scoloptoxin(16)-Er8a from Ethmostigmus rubripes (Giant centipede).